Here is a 135-residue protein sequence, read N- to C-terminus: L-alanine exporter AlaE (135 aa).

3 helical membrane-spanning segments follow: residues Val-9–Met-29, Asp-75–Gly-95, and Ala-96–Ala-116.

It belongs to the AlaE exporter family.

The protein localises to the cell inner membrane. Exports L-alanine. In Cereibacter sphaeroides (strain ATCC 17023 / DSM 158 / JCM 6121 / CCUG 31486 / LMG 2827 / NBRC 12203 / NCIMB 8253 / ATH 2.4.1.) (Rhodobacter sphaeroides), this protein is L-alanine exporter AlaE.